The chain runs to 618 residues: Beta-glucosidase C (618 aa).

The signal sequence occupies residues 1-19 (MRVDSTVLALVALATDCLG). 5 N-linked (GlcNAc...) asparagine glycosylation sites follow: asparagine 40, asparagine 82, asparagine 104, asparagine 211, and asparagine 263. Aspartate 330 is a catalytic residue. Residues asparagine 417, asparagine 448, asparagine 477, asparagine 482, asparagine 502, and asparagine 517 are each glycosylated (N-linked (GlcNAc...) asparagine).

The protein belongs to the glycosyl hydrolase 3 family.

Its subcellular location is the secreted. The enzyme catalyses Hydrolysis of terminal, non-reducing beta-D-glucosyl residues with release of beta-D-glucose.. Its pathway is glycan metabolism; cellulose degradation. In terms of biological role, beta-glucosidases are one of a number of cellulolytic enzymes involved in the degradation of cellulosic biomass. Catalyzes the last step releasing glucose from the inhibitory cellobiose. The sequence is that of Beta-glucosidase C (bglC) from Emericella nidulans (strain FGSC A4 / ATCC 38163 / CBS 112.46 / NRRL 194 / M139) (Aspergillus nidulans).